The chain runs to 517 residues: Benzoate 4-monooxygenase bphA (517 aa).

The chain crosses the membrane as a helical span at residues 4-24 (LLLSPYGAYLGLALLVLYYLL). 2 N-linked (GlcNAc...) asparagine glycosylation sites follow: Asn-282 and Asn-325. Residue Cys-461 participates in heme binding.

Belongs to the cytochrome P450 family. Requires heme as cofactor.

It is found in the membrane. The enzyme catalyses benzoate + reduced [NADPH--hemoprotein reductase] + O2 = 4-hydroxybenzoate + oxidized [NADPH--hemoprotein reductase] + H2O + H(+). In terms of biological role, cytochrome P450 monooxygenase; part of the benzoic acid degradation pathway also known as the protocatechuic acid pathway. Benzoic acid debradation begins with the conversion of benzoic acid into 4-hydroxybenzoic acid through hydroxylation by the benzoate-4-monooxygenase bphA, and its partner NADPH-cytochrome P450 reductase cprA which act as a mediator in electron donation from NADPH. 4-Hydroxybenzoic acid is then converted into 3,4-dihydroxybenzoic acid (also called protocatechuic acid) by the p-hydroxybenzoate-m-hydroxylase phhA. Protocatechuic acid is converted into 3-carboxy-cis,cis-muconic acid by the intradiol ring-cleavage dioxygenase prcA, which is further metabolized through the 3-oxoadipate pathway to finally enter the tricarboxylic acid cycle (TCA). This chain is Benzoate 4-monooxygenase bphA, found in Aspergillus niger (strain ATCC MYA-4892 / CBS 513.88 / FGSC A1513).